The primary structure comprises 365 residues: Ribosomal RNA large subunit methyltransferase F (365 aa).

The disordered stretch occupies residues 1–48; the sequence is MSKPAVKSVQSATAKTATRAVNIRQKVKAPKQAKPEGKGSTKPVKDRP. Residues 33 to 48 show a composition bias toward basic and acidic residues; that stretch reads AKPEGKGSTKPVKDRP.

The protein belongs to the methyltransferase superfamily. METTL16/RlmF family.

The protein localises to the cytoplasm. The catalysed reaction is adenosine(1618) in 23S rRNA + S-adenosyl-L-methionine = N(6)-methyladenosine(1618) in 23S rRNA + S-adenosyl-L-homocysteine + H(+). Its function is as follows. Specifically methylates the adenine in position 1618 of 23S rRNA. The protein is Ribosomal RNA large subunit methyltransferase F of Shewanella baltica (strain OS223).